A 227-amino-acid chain; its full sequence is Cytochrome c oxidase subunit 2 (227 aa).

Over 1–14 (MAYPMQLGFQDATS) the chain is Mitochondrial intermembrane. Residues 15 to 45 (PIMEELLHFHDHTLMIVFLISSLVLYVISLM) traverse the membrane as a helical segment. Over 46–59 (LTTKLTHTSTMDAQ) the chain is Mitochondrial matrix. A helical transmembrane segment spans residues 60–87 (EVETIWTILPAIILILIALPSLRILYMM). The Mitochondrial intermembrane portion of the chain corresponds to 88 to 227 (DEINNPSLTV…YFEKWSASML (140 aa)). Cu cation is bound by residues H161, C196, E198, C200, H204, and M207. E198 contacts Mg(2+). Position 218 is a phosphotyrosine (Y218).

This sequence belongs to the cytochrome c oxidase subunit 2 family. As to quaternary structure, component of the cytochrome c oxidase (complex IV, CIV), a multisubunit enzyme composed of 14 subunits. The complex is composed of a catalytic core of 3 subunits MT-CO1, MT-CO2 and MT-CO3, encoded in the mitochondrial DNA, and 11 supernumerary subunits COX4I, COX5A, COX5B, COX6A, COX6B, COX6C, COX7A, COX7B, COX7C, COX8 and NDUFA4, which are encoded in the nuclear genome. The complex exists as a monomer or a dimer and forms supercomplexes (SCs) in the inner mitochondrial membrane with NADH-ubiquinone oxidoreductase (complex I, CI) and ubiquinol-cytochrome c oxidoreductase (cytochrome b-c1 complex, complex III, CIII), resulting in different assemblies (supercomplex SCI(1)III(2)IV(1) and megacomplex MCI(2)III(2)IV(2)). Found in a complex with TMEM177, COA6, COX18, COX20, SCO1 and SCO2. Interacts with TMEM177 in a COX20-dependent manner. Interacts with COX20. Interacts with COX16. Requires Cu cation as cofactor.

It is found in the mitochondrion inner membrane. The catalysed reaction is 4 Fe(II)-[cytochrome c] + O2 + 8 H(+)(in) = 4 Fe(III)-[cytochrome c] + 2 H2O + 4 H(+)(out). Component of the cytochrome c oxidase, the last enzyme in the mitochondrial electron transport chain which drives oxidative phosphorylation. The respiratory chain contains 3 multisubunit complexes succinate dehydrogenase (complex II, CII), ubiquinol-cytochrome c oxidoreductase (cytochrome b-c1 complex, complex III, CIII) and cytochrome c oxidase (complex IV, CIV), that cooperate to transfer electrons derived from NADH and succinate to molecular oxygen, creating an electrochemical gradient over the inner membrane that drives transmembrane transport and the ATP synthase. Cytochrome c oxidase is the component of the respiratory chain that catalyzes the reduction of oxygen to water. Electrons originating from reduced cytochrome c in the intermembrane space (IMS) are transferred via the dinuclear copper A center (CU(A)) of subunit 2 and heme A of subunit 1 to the active site in subunit 1, a binuclear center (BNC) formed by heme A3 and copper B (CU(B)). The BNC reduces molecular oxygen to 2 water molecules using 4 electrons from cytochrome c in the IMS and 4 protons from the mitochondrial matrix. In Rusa unicolor (Sambar), this protein is Cytochrome c oxidase subunit 2 (MT-CO2).